The sequence spans 151 residues: UPF0336 protein Franean1_6066 (151 aa).

The MaoC-like domain maps to 8–127; the sequence is VGRSYTSDVP…NEVLVTSYEF (120 aa).

This sequence belongs to the UPF0336 family.

This is UPF0336 protein Franean1_6066 from Parafrankia sp. (strain EAN1pec).